A 209-amino-acid chain; its full sequence is D-aminoacyl-tRNA deacylase 1 (209 aa).

Positions Gly139–Pro140 match the Gly-cisPro motif, important for rejection of L-amino acids motif. The interval Thr142–Pro209 is disordered. 2 stretches are compositionally biased toward basic and acidic residues: residues Gln159 to Lys170 and Ser181 to Ser194. A phosphoserine mark is found at Ser197, Ser204, and Ser205.

The protein belongs to the DTD family. In terms of assembly, homodimer. Interacts with CDC45 and TOPBP1. Preferentially phosphorylated in cells arrested early in S phase. Phosphorylation in the C-terminus weakens the interaction with CDC45.

The protein resides in the nucleus. It localises to the cytoplasm. It catalyses the reaction glycyl-tRNA(Ala) + H2O = tRNA(Ala) + glycine + H(+). The catalysed reaction is a D-aminoacyl-tRNA + H2O = a tRNA + a D-alpha-amino acid + H(+). Its function is as follows. An aminoacyl-tRNA editing enzyme that deacylates mischarged D-aminoacyl-tRNAs. Also deacylates mischarged glycyl-tRNA(Ala), protecting cells against glycine mischarging by AlaRS. Acts via tRNA-based rather than protein-based catalysis; rejects L-amino acids rather than detecting D-amino acids in the active site. By recycling D-aminoacyl-tRNA to D-amino acids and free tRNA molecules, this enzyme counteracts the toxicity associated with the formation of D-aminoacyl-tRNA entities in vivo and helps enforce protein L-homochirality. ATPase involved in DNA replication, may facilitate loading of CDC45 onto pre-replication complexes. This is D-aminoacyl-tRNA deacylase 1 (Dtd1) from Mus musculus (Mouse).